Consider the following 360-residue polypeptide: 4-hydroxy-3-methylbut-2-en-1-yl diphosphate synthase (flavodoxin) (360 aa).

[4Fe-4S] cluster is bound by residues Cys-265, Cys-268, Cys-300, and Glu-307.

Belongs to the IspG family. [4Fe-4S] cluster serves as cofactor.

The enzyme catalyses (2E)-4-hydroxy-3-methylbut-2-enyl diphosphate + oxidized [flavodoxin] + H2O + 2 H(+) = 2-C-methyl-D-erythritol 2,4-cyclic diphosphate + reduced [flavodoxin]. It participates in isoprenoid biosynthesis; isopentenyl diphosphate biosynthesis via DXP pathway; isopentenyl diphosphate from 1-deoxy-D-xylulose 5-phosphate: step 5/6. Converts 2C-methyl-D-erythritol 2,4-cyclodiphosphate (ME-2,4cPP) into 1-hydroxy-2-methyl-2-(E)-butenyl 4-diphosphate. The protein is 4-hydroxy-3-methylbut-2-en-1-yl diphosphate synthase (flavodoxin) of Brevibacillus brevis (strain 47 / JCM 6285 / NBRC 100599).